The primary structure comprises 890 residues: UPF0182 protein SYNW1212 (890 aa).

8 helical membrane passes run 21-41 (WLLQ…AIRW), 64-84 (LTLL…NGLI), 98-118 (WQVS…LVAV), 134-154 (AVVL…SIPL), 173-193 (FAAL…CLGN), 219-239 (RLLM…CWLS), 268-288 (LLTV…SLLL), and 295-315 (VLAV…WLIL).

It belongs to the UPF0182 family.

It localises to the cell membrane. In Parasynechococcus marenigrum (strain WH8102), this protein is UPF0182 protein SYNW1212.